The primary structure comprises 600 residues: Tripeptidyl-peptidase 1 (600 aa).

The N-terminal stretch at 1-22 is a signal peptide; that stretch reads MNIKFNLIIIILFILFISNVNC. A propeptide spans 23–220 (removed in mature form); sequence KKIKNKKHLT…GGGGKVNGIG (198 aa). N-linked (GlcNAc...) asparagine glycosylation is found at N91, N259, and N266. Residues 248–600 form the Peptidase S53 domain; that stretch reads YLSPDLIRKE…FDELVKYCLE (353 aa). Catalysis depends on charge relay system residues E318 and D322. C411 and C570 form a disulfide bridge. N475 and N483 each carry an N-linked (GlcNAc...) asparagine glycan. Catalysis depends on S514, which acts as the Charge relay system. D559, I560, G579, and D581 together coordinate Ca(2+).

In terms of assembly, monomer. Ca(2+) is required as a cofactor. In terms of processing, activated by autocatalytic proteolytical processing upon acidification. N-glycosylation is required for processing and activity.

Its subcellular location is the secreted. The catalysed reaction is Release of an N-terminal tripeptide from a polypeptide, but also has endopeptidase activity.. Serine protease with tripeptidyl-peptidase I activity. The polypeptide is Tripeptidyl-peptidase 1 (tpp1) (Dictyostelium discoideum (Social amoeba)).